Here is a 202-residue protein sequence, read N- to C-terminus: Diadenylate cyclase (202 aa).

Residues 6 to 26 (VFSVIILVLLFLILALTLLFV) form a helical membrane-spanning segment. In terms of domain architecture, DAC spans 29 to 185 (NKRTRSFVIR…RGVIKTLSSN (157 aa)).

This sequence belongs to the adenylate cyclase family. DacB/CdaS subfamily. As to quaternary structure, probably oligomerizes.

The protein resides in the cell membrane. The catalysed reaction is 2 ATP = 3',3'-c-di-AMP + 2 diphosphate. Catalyzes the condensation of 2 ATP molecules into cyclic di-AMP (c-di-AMP), a second messenger used to regulate differing processes in different bacteria. The protein is Diadenylate cyclase of Mycoplasma pneumoniae (strain ATCC 29342 / M129 / Subtype 1) (Mycoplasmoides pneumoniae).